We begin with the raw amino-acid sequence, 839 residues long: Probable alpha-glucuronidase A (839 aa).

A signal peptide spans 1–18 (MRWSFLTVLLWLVSLTGA). N-linked (GlcNAc...) asparagine glycosylation is found at asparagine 49, asparagine 101, asparagine 148, asparagine 221, asparagine 278, asparagine 309, asparagine 342, asparagine 464, asparagine 526, asparagine 575, asparagine 681, and asparagine 731.

This sequence belongs to the glycosyl hydrolase 67 family.

It is found in the secreted. It carries out the reaction an alpha-D-glucuronoside + H2O = D-glucuronate + an alcohol. Alpha-glucuronidase involved in the hydrolysis of xylan, a major structural heterogeneous polysaccharide found in plant biomass representing the second most abundant polysaccharide in the biosphere, after cellulose. Releases 4-O-methylglucuronic acid from xylan. The chain is Probable alpha-glucuronidase A (aguA) from Aspergillus flavus (strain ATCC 200026 / FGSC A1120 / IAM 13836 / NRRL 3357 / JCM 12722 / SRRC 167).